Consider the following 421-residue polypeptide: Replication factor C large subunit (421 aa).

63–70 (GPPGIGKT) is an ATP binding site.

Belongs to the activator 1 small subunits family. RfcL subfamily. As to quaternary structure, heteromultimer composed of small subunits (RfcS) and large subunits (RfcL).

In terms of biological role, part of the RFC clamp loader complex which loads the PCNA sliding clamp onto DNA. This Pyrobaculum calidifontis (strain DSM 21063 / JCM 11548 / VA1) protein is Replication factor C large subunit.